A 567-amino-acid chain; its full sequence is TNF receptor-associated factor 3 (567 aa).

Residues 1-26 form a disordered region; it reads MESSKKMDAAGTLQPNPPLKLQPDRG. C55 participates in a covalent cross-link: Glycyl cysteine thioester (Cys-Gly) (interchain with G-Cter in ubiquitin). The RING-type zinc finger occupies 67–76; it reads CGHRFCESCM. Residue K106 forms a Glycyl lysine isopeptide (Lys-Gly) (interchain with G-Cter in ubiquitin) linkage. C123 participates in a covalent cross-link: Glycyl cysteine thioester (Cys-Gly) (interchain with G-Cter in ubiquitin). 2 consecutive TRAF-type zinc fingers follow at residues 134–189 and 190–248; these read VHLK…IKLQ and KHED…QQIK. Glycyl lysine isopeptide (Lys-Gly) (interchain with G-Cter in ubiquitin) cross-links involve residues K155 and K167. Residues 266-337 are a coiled coil; it reads SNSLEKKVSL…KLKELDKEIR (72 aa). K328 participates in a covalent cross-link: Glycyl lysine isopeptide (Lys-Gly) (interchain with G-Cter in ubiquitin). An MATH domain is found at 414 to 559; sequence NGVLIWKIRD…DDTIFIKVIV (146 aa).

The protein belongs to the TNF receptor-associated factor family. A subfamily. In terms of assembly, homotrimer. Heterotrimer with TRAF2 and TRAF5. Interacts with LTBR/TNFRSF3, TNFRSF4, TNFRSF5/CD40, TNFRSF8/CD30, TNFRSF13C TNFRSF17/BCMA, TLR4 and EDAR. Interacts with MAP3K5, MAP3K14, TRAIP/TRIP, TDP2/TTRAP, TANK/ITRAF and TRAF3IP1. Interaction with TNFRSF5/CD40 is modulated by TANK/ITRAF, which competes for the same binding site. Interacts with TICAM1. Interacts with TRAFD1. Interacts with OTUB1, OTUB2 and OTUD5. Interacts with RNF216, OPTN and TBK1. Identified in a complex with TRAF2, MAP3K14 and BIRC3. Upon exposure to bacterial lipopolysaccharide (LPS), recruited to a transient complex containing TLR4, TRAF3, TRAF6, IKBKG, MAP3K7, MYD88, TICAM1, BIRC2, BIRC3 and UBE2N. Interacts (via RING-type zinc finger domain) with SRC. Interacts with CARD14. Interacts (via MATH domain) with PTPN22; the interaction promotes TRAF3 polyubiquitination. Interacts with MAVS. Directly interacts with DDX3X; this interaction stimulates TRAF3 'Lys-63' ubiquitination. Interacts with IRF3. Interacts with IKBKE in the course of viral infection. Interacts with TRIM35. Interacts with GAPDH; promoting TRAF3 ubiquitination. Interacts with PPP3CA and PPP3CB. Interacts with RALGDS. Interacts with FBXO11. Undergoes 'Lys-48'-linked polyubiquitination, leading to its proteasomal degradation in response to signaling by TNFSF13B, TLR4 or through CD40. 'Lys-48'-linked polyubiquitinated form is deubiquitinated by OTUD7B, preventing TRAF3 proteolysis and over-activation of non-canonical NF-kappa-B. Undergoes 'Lys-63'-linked ubiquitination during early stages of virus infection, and 'Lys-48'-linked ubiquitination during later stages. Undergoes both 'Lys-48'-linked and 'Lys-63'-linked ubiquitination in response to TLR3 and TLR4 signaling. 'Lys-63'-linked ubiquitination can be mediated by TRIM35. Deubiquitinated by OTUB1, OTUB2 and OTUD5. Undergoes 'Lys-63'-linked deubiquitination by MYSM1 to terminate the pattern-recognition receptors/PRRs pathways. Ubiquitinated at Lys-328 by the SCF(FBXL2) complex, leading to its degradation by the proteasome. In terms of processing, undergoes 'Lys-48'-linked polyubiquitination, leading to its proteasomal degradation in response to signaling by TNFSF13B, TLR4 or through CD40. 'Lys-48'-linked polyubiquitinated form is deubiquitinated by OTUD7B, preventing TRAF3 proteolysis and over-activation of non-canonical NF-kappa-B. Undergoes 'Lys-63'-linked ubiquitination during early stages of virus infection, and 'Lys-48'-linked ubiquitination during later stages. Undergoes both 'Lys-48'-linked and 'Lys-63'-linked ubiquitination in response to TLR3 and TLR4 signaling. 'Lys-63'-linked ubiquitination can be mediated by TRIM35. Deubiquitinated by OTUB1, OTUB2 and OTUD5. Undergoes 'Lys-63'-linked deubiquitination by MYSM1 to terminate the pattern-recognition receptors/PRRs pathways. Also undergoes 'Lys-29'-linked ubiquitination on Cys-55 and Cys-123 by NEDD4L; leading to increased 'Lys-48'- and 'Lys-63'-linked ubiquitination as well as increased binding to TBK1. TLR4 signals emanating from bacteria containing vesicles trigger 'Lys-33'-linked polyubiquitination that promotes the assembly of the exocyst complex thereby connecting innate immune signaling to the cellular trafficking apparatus. Deubiquitinated by USP25 during viral infection, leading to TRAF3 stabilization and type I interferon production. 'Lys-63'-linked ubiquitination by FBXO11 in a NEDD8-dependent manner promotes the amplification of IFN-I signaling. As to expression, detected in bone marrow macrophages and spleen B-cells (at protein level). In adult, highest in brain. Also found in kidney, heart, thymus, spleen, lung, muscle, testis and ovary. Not found in liver.

Its subcellular location is the cytoplasm. It is found in the endosome. The protein localises to the mitochondrion. The catalysed reaction is S-ubiquitinyl-[E2 ubiquitin-conjugating enzyme]-L-cysteine + [acceptor protein]-L-lysine = [E2 ubiquitin-conjugating enzyme]-L-cysteine + N(6)-ubiquitinyl-[acceptor protein]-L-lysine.. Its function is as follows. Cytoplasmic E3 ubiquitin ligase that regulates various signaling pathways, such as the NF-kappa-B, mitogen-activated protein kinase (MAPK) and interferon regulatory factor (IRF) pathways, and thus controls a lot of biological processes in both immune and non-immune cell types. In TLR and RLR signaling pathways, acts as an E3 ubiquitin ligase promoting the synthesis of 'Lys-63'-linked polyubiquitin chains on several substrates such as ASC that lead to the activation of the type I interferon response or the inflammasome. Following the activation of certain TLRs such as TLR4, acts as a negative NF-kappa-B regulator, possibly to avoid unregulated inflammatory response, and its degradation via 'Lys-48'-linked polyubiquitination is required for MAPK activation and production of inflammatory cytokines. Alternatively, when TLR4 orchestrates bacterial expulsion, TRAF3 undergoes 'Lys-33'-linked polyubiquitination and subsequently binds to RALGDS, mobilizing the exocyst complex to rapidly expel intracellular bacteria back for clearance. Also acts as a constitutive negative regulator of the alternative NF-kappa-B pathway, which controls B-cell survival and lymphoid organ development. Required for normal antibody isotype switching from IgM to IgG. Plays a role T-cell dependent immune responses. Down-regulates proteolytic processing of NFKB2, and thereby inhibits non-canonical activation of NF-kappa-B. Promotes ubiquitination and proteasomal degradation of MAP3K14. The sequence is that of TNF receptor-associated factor 3 from Mus musculus (Mouse).